Reading from the N-terminus, the 220-residue chain is Nitrile hydratase subunit beta (220 aa).

It belongs to the nitrile hydratase subunit beta family. In terms of assembly, heterodimer of an alpha and a beta chain.

It catalyses the reaction an aliphatic primary amide = an aliphatic nitrile + H2O. NHase catalyzes the hydration of various nitrile compounds to the corresponding amides. The sequence is that of Nitrile hydratase subunit beta (nthB) from Pseudomonas chlororaphis (Pseudomonas aureofaciens).